Consider the following 606-residue polypeptide: Fructan 6-exohydrolase (606 aa).

Positions 1 to 21 (MAPNNGSWLVLSISMMLLSHG) are cleaved as a signal peptide. Asn-5 is a glycosylation site (N-linked (GlcNAc...) asparagine). Residue Asp-70 is part of the active site. 5 N-linked (GlcNAc...) asparagine glycosylation sites follow: Asn-110, Asn-164, Asn-193, Asn-237, and Asn-346. A disulfide bond links Cys-445 and Cys-491. Asn-564, Asn-585, Asn-590, and Asn-593 each carry an N-linked (GlcNAc...) asparagine glycan.

This sequence belongs to the glycosyl hydrolase 32 family.

The catalysed reaction is Hydrolysis of terminal, non-reducing (2-&gt;6)-linked beta-D-fructofuranose residues in fructans.. With respect to regulation, not inhibited by sucrose. Hydrolyzes levan-type beta-(2-&gt;6)-linked fructans to fructose, but not inulin-type beta-(2-&gt;1)-linked fructans. The polypeptide is Fructan 6-exohydrolase (Beta vulgaris (Sugar beet)).